The sequence spans 276 residues: Ribosomal RNA small subunit methyltransferase A (276 aa).

Residues asparagine 16, leucine 18, glycine 43, glutamate 64, aspartate 89, and asparagine 109 each coordinate S-adenosyl-L-methionine.

It belongs to the class I-like SAM-binding methyltransferase superfamily. rRNA adenine N(6)-methyltransferase family. RsmA subfamily.

It localises to the cytoplasm. The catalysed reaction is adenosine(1518)/adenosine(1519) in 16S rRNA + 4 S-adenosyl-L-methionine = N(6)-dimethyladenosine(1518)/N(6)-dimethyladenosine(1519) in 16S rRNA + 4 S-adenosyl-L-homocysteine + 4 H(+). Specifically dimethylates two adjacent adenosines (A1518 and A1519) in the loop of a conserved hairpin near the 3'-end of 16S rRNA in the 30S particle. May play a critical role in biogenesis of 30S subunits. This is Ribosomal RNA small subunit methyltransferase A from Marinobacter nauticus (strain ATCC 700491 / DSM 11845 / VT8) (Marinobacter aquaeolei).